A 1058-amino-acid chain; its full sequence is Carbamoyl phosphate synthase large chain (1058 aa).

Positions 1-401 (MAKRTDIKKI…CLLKACRSLE (401 aa)) are carboxyphosphate synthetic domain. 12 residues coordinate ATP: Arg129, Arg169, Gly175, Gly176, Arg208, Ile210, Glu215, Gly241, Ile242, His243, Gln284, and Glu298. Positions 133–327 (KQLMKELGEP…IAKIAAKIAV (195 aa)) constitute an ATP-grasp 1 domain. The Mg(2+) site is built by Gln284, Glu298, and Asn300. Gln284, Glu298, and Asn300 together coordinate Mn(2+). Residues 402-546 (IGVHHNELKG…YSTYEWENES (145 aa)) form an oligomerization domain region. Residues 547–929 (IKSEKESVIV…ALYKAFEASY (383 aa)) form a carbamoyl phosphate synthetic domain region. Residues 671–861 (EKALKELGIP…MAQVATKLIL (191 aa)) enclose the ATP-grasp 2 domain. ATP-binding residues include Arg707, Ser746, Ile748, Glu752, Gly777, Val778, His779, Ser780, Gln820, and Glu832. Mg(2+) contacts are provided by Gln820, Glu832, and Asn834. Positions 820, 832, and 834 each coordinate Mn(2+). Residues 930–1058 (LHMPEYGTIV…ESRTFSIEAI (129 aa)) form the MGS-like domain. Residues 930 to 1058 (LHMPEYGTIV…ESRTFSIEAI (129 aa)) form an allosteric domain region.

The protein belongs to the CarB family. As to quaternary structure, composed of two chains; the small (or glutamine) chain promotes the hydrolysis of glutamine to ammonia, which is used by the large (or ammonia) chain to synthesize carbamoyl phosphate. Tetramer of heterodimers (alpha,beta)4. Mg(2+) serves as cofactor. Mn(2+) is required as a cofactor.

The enzyme catalyses hydrogencarbonate + L-glutamine + 2 ATP + H2O = carbamoyl phosphate + L-glutamate + 2 ADP + phosphate + 2 H(+). It carries out the reaction hydrogencarbonate + NH4(+) + 2 ATP = carbamoyl phosphate + 2 ADP + phosphate + 2 H(+). It participates in amino-acid biosynthesis; L-arginine biosynthesis; carbamoyl phosphate from bicarbonate: step 1/1. It functions in the pathway pyrimidine metabolism; UMP biosynthesis via de novo pathway; (S)-dihydroorotate from bicarbonate: step 1/3. Its function is as follows. Large subunit of the glutamine-dependent carbamoyl phosphate synthetase (CPSase). CPSase catalyzes the formation of carbamoyl phosphate from the ammonia moiety of glutamine, carbonate, and phosphate donated by ATP, constituting the first step of 2 biosynthetic pathways, one leading to arginine and/or urea and the other to pyrimidine nucleotides. The large subunit (synthetase) binds the substrates ammonia (free or transferred from glutamine from the small subunit), hydrogencarbonate and ATP and carries out an ATP-coupled ligase reaction, activating hydrogencarbonate by forming carboxy phosphate which reacts with ammonia to form carbamoyl phosphate. In Streptococcus equi subsp. equi (strain 4047), this protein is Carbamoyl phosphate synthase large chain.